Consider the following 92-residue polypeptide: Anti-restriction endonuclease (92 aa).

Pays a role in the inhibition of the host restriction-modification system. Strongly inhibits the host mcrA endonuclease that cleaves 5-methyl and 5-hydroxymethylcytosines at the specific DNA sequence C(me)CGG. The sequence is that of Anti-restriction endonuclease (arn) from Enterobacteria phage T4 (Bacteriophage T4).